A 111-amino-acid polypeptide reads, in one-letter code: UPF0145 protein BMA10229_A0446 (111 aa).

The protein belongs to the UPF0145 family.

This Burkholderia mallei (strain NCTC 10229) protein is UPF0145 protein BMA10229_A0446.